Reading from the N-terminus, the 122-residue chain is MSITKEQILDAVAEMSVMDVVELISMMEEKFGVSAAAAVAVAAGGPAEAAEEKTEFDVVLSAIGANKVAVIKAVRGATGLGLKEAKDLVESAPATLKEGVSKDDAETLKKDLEQAGASVEVK.

Belongs to the bacterial ribosomal protein bL12 family. As to quaternary structure, homodimer. Part of the ribosomal stalk of the 50S ribosomal subunit. Forms a multimeric L10(L12)X complex, where L10 forms an elongated spine to which 2 to 4 L12 dimers bind in a sequential fashion. Binds GTP-bound translation factors.

Forms part of the ribosomal stalk which helps the ribosome interact with GTP-bound translation factors. Is thus essential for accurate translation. In Sodalis glossinidius (strain morsitans), this protein is Large ribosomal subunit protein bL12.